Consider the following 147-residue polypeptide: uncharacterized protein (147 aa).

Belongs to the limonene-1,2-epoxide hydrolase family.

This is an uncharacterized protein from Bacillus subtilis (strain 168).